The chain runs to 142 residues: Large ribosomal subunit protein uL11 (142 aa).

The protein belongs to the universal ribosomal protein uL11 family. As to quaternary structure, part of the ribosomal stalk of the 50S ribosomal subunit. Interacts with L10 and the large rRNA to form the base of the stalk. L10 forms an elongated spine to which L12 dimers bind in a sequential fashion forming a multimeric L10(L12)X complex. Post-translationally, one or more lysine residues are methylated.

In terms of biological role, forms part of the ribosomal stalk which helps the ribosome interact with GTP-bound translation factors. This chain is Large ribosomal subunit protein uL11, found in Shewanella piezotolerans (strain WP3 / JCM 13877).